The sequence spans 104 residues: Pyrimidine/purine nucleoside phosphorylase (104 aa).

This sequence belongs to the nucleoside phosphorylase PpnP family.

It carries out the reaction a purine D-ribonucleoside + phosphate = a purine nucleobase + alpha-D-ribose 1-phosphate. The enzyme catalyses adenosine + phosphate = alpha-D-ribose 1-phosphate + adenine. It catalyses the reaction cytidine + phosphate = cytosine + alpha-D-ribose 1-phosphate. The catalysed reaction is guanosine + phosphate = alpha-D-ribose 1-phosphate + guanine. It carries out the reaction inosine + phosphate = alpha-D-ribose 1-phosphate + hypoxanthine. The enzyme catalyses thymidine + phosphate = 2-deoxy-alpha-D-ribose 1-phosphate + thymine. It catalyses the reaction uridine + phosphate = alpha-D-ribose 1-phosphate + uracil. The catalysed reaction is xanthosine + phosphate = alpha-D-ribose 1-phosphate + xanthine. In terms of biological role, catalyzes the phosphorolysis of diverse nucleosides, yielding D-ribose 1-phosphate and the respective free bases. Can use uridine, adenosine, guanosine, cytidine, thymidine, inosine and xanthosine as substrates. Also catalyzes the reverse reactions. This is Pyrimidine/purine nucleoside phosphorylase from Geotalea uraniireducens (strain Rf4) (Geobacter uraniireducens).